Here is a 331-residue protein sequence, read N- to C-terminus: 6-phosphogluconolactonase (331 aa).

It belongs to the cycloisomerase 2 family.

The catalysed reaction is 6-phospho-D-glucono-1,5-lactone + H2O = 6-phospho-D-gluconate + H(+). The protein operates within carbohydrate degradation; pentose phosphate pathway; D-ribulose 5-phosphate from D-glucose 6-phosphate (oxidative stage): step 2/3. Its function is as follows. Catalyzes the hydrolysis of 6-phosphogluconolactone to 6-phosphogluconate. The chain is 6-phosphogluconolactonase from Salmonella paratyphi A (strain ATCC 9150 / SARB42).